We begin with the raw amino-acid sequence, 139 residues long: D-ribose pyranase (139 aa).

Catalysis depends on His-20, which acts as the Proton donor. Substrate is bound by residues Asp-28, His-106, and 128–130 (YAN).

It belongs to the RbsD / FucU family. RbsD subfamily. As to quaternary structure, homodecamer.

It localises to the cytoplasm. It carries out the reaction beta-D-ribopyranose = beta-D-ribofuranose. The protein operates within carbohydrate metabolism; D-ribose degradation; D-ribose 5-phosphate from beta-D-ribopyranose: step 1/2. Catalyzes the interconversion of beta-pyran and beta-furan forms of D-ribose. The protein is D-ribose pyranase of Citrobacter koseri (strain ATCC BAA-895 / CDC 4225-83 / SGSC4696).